Consider the following 246-residue polypeptide: Thiamine import ATP-binding protein ThiQ (246 aa).

The ABC transporter domain maps to 10–239 (VKLDALAFAY…QGPPAFARYL (230 aa)). Position 41–48 (41–48 (GPSGSGKS)) interacts with ATP.

The protein belongs to the ABC transporter superfamily. Thiamine importer (TC 3.A.1.19.1) family. As to quaternary structure, the complex is composed of two ATP-binding proteins (ThiQ), two transmembrane proteins (ThiP) and a solute-binding protein (ThiB).

The protein resides in the cell inner membrane. The catalysed reaction is thiamine(out) + ATP + H2O = thiamine(in) + ADP + phosphate + H(+). In terms of biological role, part of the ABC transporter complex ThiBPQ involved in thiamine import. Responsible for energy coupling to the transport system. The sequence is that of Thiamine import ATP-binding protein ThiQ from Chelativorans sp. (strain BNC1).